We begin with the raw amino-acid sequence, 233 residues long: Large ribosomal subunit protein uL1 (233 aa).

Belongs to the universal ribosomal protein uL1 family. In terms of assembly, part of the 50S ribosomal subunit.

In terms of biological role, binds directly to 23S rRNA. The L1 stalk is quite mobile in the ribosome, and is involved in E site tRNA release. Its function is as follows. Protein L1 is also a translational repressor protein, it controls the translation of the L11 operon by binding to its mRNA. The polypeptide is Large ribosomal subunit protein uL1 (Geobacillus stearothermophilus (Bacillus stearothermophilus)).